The chain runs to 301 residues: Probable alpha-L-glutamate ligase (301 aa).

Positions 104–287 constitute an ATP-grasp domain; it reads LQLLSRKGVG…IAGMVIDFIE (184 aa). ATP contacts are provided by residues Lys141, 178-179, Asp187, and 211-213; these read EY and RSN. Mg(2+) contacts are provided by Asp248, Glu260, and Asn262. Positions 248, 260, and 262 each coordinate Mn(2+).

Belongs to the RimK family. Requires Mg(2+) as cofactor. Mn(2+) is required as a cofactor.

The sequence is that of Probable alpha-L-glutamate ligase from Pseudoalteromonas translucida (strain TAC 125).